A 255-amino-acid chain; its full sequence is Small ribosomal subunit protein uS2 (255 aa).

The segment at 230–255 is disordered; the sequence is QSSSGRDLGASSEVPVEPALEEAAEG.

It belongs to the universal ribosomal protein uS2 family.

This Rhizobium etli (strain CIAT 652) protein is Small ribosomal subunit protein uS2.